The following is a 298-amino-acid chain: Short-chain dehydrogenase/reductase prx6 (298 aa).

Residues I27, D70, N97, Y174, K178, V208, and T210 each coordinate NADP(+). The active-site Proton acceptor is Y174. The active-site Lowers pKa of active site Tyr is the K178.

Belongs to the short-chain dehydrogenases/reductases (SDR) family.

It functions in the pathway sesquiterpene biosynthesis. Short-chain dehydrogenase/reductase; part of the gene cluster that mediates the biosynthesis of PR-toxin, a bicyclic sesquiterpene belonging to the eremophilane class and acting as a mycotoxin. The first step of the pathway is catalyzed by the aristolochene synthase which performs the cyclization of trans,trans-farnesyl diphosphate (FPP) to the bicyclic sesquiterpene aristolochene. Following the formation of aristolochene, the non-oxygenated aristolochene is converted to the trioxygenated intermediate eremofortin B, via 7-epi-neopetasone. This conversion appears to involve three enzymes, a hydroxysterol oxidase-like enzyme, the quinone-oxidase prx3 that forms the quinone-type-structure in the bicyclic nucleus of aristolochene with the C8-oxo group and the C-3 hydroxyl group, and the P450 monooxygenase prx9 that introduces the epoxide at the double bond between carbons 1 and 2. No monoxy or dioxy-intermediates have been reported to be released to the broth, so these three early oxidative reactions may be coupled together. Eremofortin B is further oxidized by another P450 monooxygenase, that introduces a second epoxide between carbons 7 and 11 prior to acetylation to eremofortin A by the acetyltransferase prx11. The second epoxidation may be performed by a second P450 monooxygenase. After the acetylation step, eremofortin A is converted to eremofortin C and then to PR-toxin. First the conversion of eremofortin A to eremofortin C proceeds by oxidation of the side chain of the molecule at C-12 and is catalyzed by the short-chain oxidoreductase prx1. The cytochrome P450 monooxygenase prx8 also plays a role in this step. The primary alcohol formed at C-12 is finally oxidized by the short-chain alcohol dehydrogenase prx4 that forms PR-toxin. The protein is Short-chain dehydrogenase/reductase prx6 of Penicillium rubens (strain ATCC 28089 / DSM 1075 / NRRL 1951 / Wisconsin 54-1255) (Penicillium chrysogenum).